Reading from the N-terminus, the 371-residue chain is Peptide chain release factor 2 (371 aa).

Gln251 bears the N5-methylglutamine mark.

The protein belongs to the prokaryotic/mitochondrial release factor family. In terms of processing, methylated by PrmC. Methylation increases the termination efficiency of RF2.

It is found in the cytoplasm. Its function is as follows. Peptide chain release factor 2 directs the termination of translation in response to the peptide chain termination codons UGA and UAA. This Arthrobacter sp. (strain FB24) protein is Peptide chain release factor 2.